A 1409-amino-acid chain; its full sequence is DNA-directed RNA polymerase subunit beta' (1409 aa).

Residues Cys70, Cys72, Cys85, and Cys88 each contribute to the Zn(2+) site. Mg(2+) contacts are provided by Asp458, Asp460, and Asp462. The Zn(2+) site is built by Cys813, Cys887, Cys894, and Cys897.

The protein belongs to the RNA polymerase beta' chain family. In terms of assembly, the RNAP catalytic core consists of 2 alpha, 1 beta, 1 beta' and 1 omega subunit. When a sigma factor is associated with the core the holoenzyme is formed, which can initiate transcription. Mg(2+) is required as a cofactor. Zn(2+) serves as cofactor.

The enzyme catalyses RNA(n) + a ribonucleoside 5'-triphosphate = RNA(n+1) + diphosphate. Its function is as follows. DNA-dependent RNA polymerase catalyzes the transcription of DNA into RNA using the four ribonucleoside triphosphates as substrates. The protein is DNA-directed RNA polymerase subunit beta' of Acidovorax ebreus (strain TPSY) (Diaphorobacter sp. (strain TPSY)).